Reading from the N-terminus, the 474-residue chain is Probable diacyglycerol O-acyltransferase Tgs4 (474 aa).

Residue His-135 is the Proton acceptor of the active site.

This sequence belongs to the long-chain O-acyltransferase family.

It catalyses the reaction an acyl-CoA + a 1,2-diacyl-sn-glycerol = a triacyl-sn-glycerol + CoA. The protein operates within glycerolipid metabolism; triacylglycerol biosynthesis. Required for maintaining the appropriate mycolic acid composition and permeability of the envelope on its exposure to acidic pH. This chain is Probable diacyglycerol O-acyltransferase Tgs4 (tgs4), found in Mycobacterium tuberculosis (strain CDC 1551 / Oshkosh).